The primary structure comprises 75 residues: uncharacterized protein (75 aa).

Helical transmembrane passes span 7-26 (LINA…AASA) and 36-58 (MHLF…FCPV).

The protein localises to the cell membrane. This is an uncharacterized protein from Bacillus subtilis (strain 168).